Here is a 1348-residue protein sequence, read N- to C-terminus: Phosphoribosylformylglycinamidine synthase (1348 aa).

Residues glycine 300–aspartate 311 and alanine 701 each bind ATP. 4 residues coordinate Mg(2+): aspartate 702, glutamate 741, asparagine 745, and aspartate 941. An ATP-binding site is contributed by serine 943. Positions valine 1099 to glycine 1348 constitute a Glutamine amidotransferase type-1 domain. Cysteine 1192 acts as the Nucleophile in catalysis. Catalysis depends on residues histidine 1313 and glutamate 1315.

In the N-terminal section; belongs to the FGAMS family. As to quaternary structure, monomer.

It localises to the cytoplasm. It catalyses the reaction N(2)-formyl-N(1)-(5-phospho-beta-D-ribosyl)glycinamide + L-glutamine + ATP + H2O = 2-formamido-N(1)-(5-O-phospho-beta-D-ribosyl)acetamidine + L-glutamate + ADP + phosphate + H(+). Its pathway is purine metabolism; IMP biosynthesis via de novo pathway; 5-amino-1-(5-phospho-D-ribosyl)imidazole from N(2)-formyl-N(1)-(5-phospho-D-ribosyl)glycinamide: step 1/2. Functionally, phosphoribosylformylglycinamidine synthase involved in the purines biosynthetic pathway. Catalyzes the ATP-dependent conversion of formylglycinamide ribonucleotide (FGAR) and glutamine to yield formylglycinamidine ribonucleotide (FGAM) and glutamate. This Xanthomonas axonopodis pv. citri (strain 306) protein is Phosphoribosylformylglycinamidine synthase.